We begin with the raw amino-acid sequence, 1179 residues long: Integrin alpha-1 (1179 aa).

The first 28 residues, 1-28, serve as a signal peptide directing secretion; that stretch reads MVPRRPASLEVTVACIWLLTVILGVCIS. At 29–1141 the chain is on the extracellular side; it reads FNVDVKNSMS…SKDGLPGRVP (1113 aa). The FG-GAP 1 repeat unit spans residues 30 to 91; the sequence is NVDVKNSMSF…CPVGRERSMP (62 aa). Cys82 and Cys92 are joined by a disulfide. 9 N-linked (GlcNAc...) asparagine glycosylation sites follow: Asn100, Asn105, Asn112, Asn217, Asn317, Asn341, Asn402, Asn418, and Asn459. One copy of the FG-GAP 2 repeat lies at 101-160; that stretch reads TSIPNVTEIKENMTFGSTLVTNPKGGFLACGPLYAYRCGHLHYTTGICSDVSPTFQVVNS. Residues 175–364 form the VWFA domain; the sequence is IVLDGSNSIY…LGERIFALEA (190 aa). One copy of the FG-GAP 3 repeat lies at 365–417; the sequence is TADQSAASFEMEMSQTGFSAHYSQDWVMLGAVGAYDWNGTVVMQKANQIVIPH. FG-GAP repeat units lie at residues 422-474, 475-537, 556-614, and 618-678; these read QTEP…DGDV, NILQ…RFEY, SCTK…TIRK, and QRIP…FEPN. Ca(2+) contacts are provided by Asp497, Asp499, Asp501, and Asp505. Asn531 is a glycosylation site (N-linked (GlcNAc...) asparagine). 8 residues coordinate Ca(2+): Asp579, Asn581, Asp583, Asp587, Asp641, Asn643, Asp645, and Asp649. The cysteines at positions 687 and 696 are disulfide-linked. Asn698, Asn747, and Asn779 each carry an N-linked (GlcNAc...) asparagine glycan. Residues Cys702 and Cys755 are joined by a disulfide bond. A disulfide bond links Cys807 and Cys813. Asn839, Asn882, Asn907, Asn938, Asn965, Asn973, and Asn1007 each carry an N-linked (GlcNAc...) asparagine glycan. A disulfide bond links Cys877 and Cys885. Disulfide bonds link Cys1029-Cys1062 and Cys1065-Cys1072. Asn1083, Asn1102, and Asn1113 each carry an N-linked (GlcNAc...) asparagine glycan. The chain crosses the membrane as a helical span at residues 1142 to 1164; the sequence is LWVILLSAFAGLLLLMLLILALW. Topologically, residues 1165 to 1179 are cytoplasmic; the sequence is KIGFFKRPLKKKMEK. A GFFKR motif motif is present at residues 1167 to 1171; sequence GFFKR.

This sequence belongs to the integrin alpha chain family. In terms of assembly, heterodimer of an alpha and a beta subunit. Alpha-1 associates with beta-1. Interacts with RAB21. Interacts (via cytoplasmic domain) with PTPN2; activates PTPN2 phosphatase activity towards EGFR and negatively regulates EGF signaling.

The protein resides in the membrane. In terms of biological role, integrin alpha-1/beta-1 is a receptor for laminin and collagen. It recognizes the proline-hydroxylated sequence G-F-P-G-E-R in collagen. Involved in anchorage-dependent, negative regulation of EGF-stimulated cell growth. This chain is Integrin alpha-1 (Itga1), found in Mus musculus (Mouse).